Consider the following 93-residue polypeptide: DNA-directed RNA polymerase subunit omega (93 aa).

It belongs to the RNA polymerase subunit omega family. As to quaternary structure, the RNAP catalytic core consists of 2 alpha, 1 beta, 1 beta' and 1 omega subunit. When a sigma factor is associated with the core the holoenzyme is formed, which can initiate transcription.

It carries out the reaction RNA(n) + a ribonucleoside 5'-triphosphate = RNA(n+1) + diphosphate. In terms of biological role, promotes RNA polymerase assembly. Latches the N- and C-terminal regions of the beta' subunit thereby facilitating its interaction with the beta and alpha subunits. The protein is DNA-directed RNA polymerase subunit omega of Glaesserella parasuis serovar 5 (strain SH0165) (Haemophilus parasuis).